The sequence spans 379 residues: Serpin B5 (379 aa).

N-linked (GlcNAc...) asparagine glycans are attached at residues Asn-133, Asn-176, and Asn-361.

The protein belongs to the serpin family. Ov-serpin subfamily.

Its subcellular location is the secreted. The protein localises to the extracellular space. May not exhibit serine protease inhibitory activity. The polypeptide is Serpin B5 (serpinb5) (Xenopus tropicalis (Western clawed frog)).